We begin with the raw amino-acid sequence, 205 residues long: Holliday junction branch migration complex subunit RuvA (205 aa).

The tract at residues methionine 1–arginine 64 is domain I. A domain II region spans residues serine 65–valine 143. The tract at residues alanine 144–serine 153 is flexible linker. The tract at residues serine 153–lysine 205 is domain III.

This sequence belongs to the RuvA family. In terms of assembly, homotetramer. Forms an RuvA(8)-RuvB(12)-Holliday junction (HJ) complex. HJ DNA is sandwiched between 2 RuvA tetramers; dsDNA enters through RuvA and exits via RuvB. An RuvB hexamer assembles on each DNA strand where it exits the tetramer. Each RuvB hexamer is contacted by two RuvA subunits (via domain III) on 2 adjacent RuvB subunits; this complex drives branch migration. In the full resolvosome a probable DNA-RuvA(4)-RuvB(12)-RuvC(2) complex forms which resolves the HJ.

It localises to the cytoplasm. In terms of biological role, the RuvA-RuvB-RuvC complex processes Holliday junction (HJ) DNA during genetic recombination and DNA repair, while the RuvA-RuvB complex plays an important role in the rescue of blocked DNA replication forks via replication fork reversal (RFR). RuvA specifically binds to HJ cruciform DNA, conferring on it an open structure. The RuvB hexamer acts as an ATP-dependent pump, pulling dsDNA into and through the RuvAB complex. HJ branch migration allows RuvC to scan DNA until it finds its consensus sequence, where it cleaves and resolves the cruciform DNA. The sequence is that of Holliday junction branch migration complex subunit RuvA from Rhodopseudomonas palustris (strain BisB18).